A 146-amino-acid chain; its full sequence is Hemoglobin subunit beta (146 aa).

At valine 1 the chain carries N-acetylvaline. The Globin domain occupies 2–146; the sequence is HLTDGEKNAL…VANALAHKYH (145 aa). Phosphoserine is present on serine 44. Lysine 59 carries the N6-acetyllysine modification. Residue histidine 63 coordinates heme b. Lysine 82 is subject to N6-acetyllysine. A heme b-binding site is contributed by histidine 92. Position 93 is an S-nitrosocysteine (cysteine 93). Lysine 144 is modified (N6-acetyllysine).

It belongs to the globin family. Heterotetramer of two alpha chains and two beta chains. Red blood cells.

Its function is as follows. Involved in oxygen transport from the lung to the various peripheral tissues. The chain is Hemoglobin subunit beta from Otospermophilus beecheyi (California ground squirrel).